We begin with the raw amino-acid sequence, 481 residues long: Serine--tRNA ligase (481 aa).

284–286 is an L-serine binding site; it reads TAE. 315–317 lines the ATP pocket; that stretch reads RAE. Glutamate 338 is a binding site for L-serine. 405–408 lines the ATP pocket; sequence EISS. Serine 440 provides a ligand contact to L-serine.

This sequence belongs to the class-II aminoacyl-tRNA synthetase family. Type-1 seryl-tRNA synthetase subfamily. As to quaternary structure, homodimer. The tRNA molecule binds across the dimer.

It is found in the cytoplasm. It carries out the reaction tRNA(Ser) + L-serine + ATP = L-seryl-tRNA(Ser) + AMP + diphosphate + H(+). The enzyme catalyses tRNA(Sec) + L-serine + ATP = L-seryl-tRNA(Sec) + AMP + diphosphate + H(+). The protein operates within aminoacyl-tRNA biosynthesis; selenocysteinyl-tRNA(Sec) biosynthesis; L-seryl-tRNA(Sec) from L-serine and tRNA(Sec): step 1/1. In terms of biological role, catalyzes the attachment of serine to tRNA(Ser). Is also able to aminoacylate tRNA(Sec) with serine, to form the misacylated tRNA L-seryl-tRNA(Sec), which will be further converted into selenocysteinyl-tRNA(Sec). This is Serine--tRNA ligase from Rhodopseudomonas palustris (strain BisB18).